Here is a 382-residue protein sequence, read N- to C-terminus: Succinate--CoA ligase [ADP-forming] subunit beta (382 aa).

The ATP-grasp domain occupies 9-240 (KELFLRYGVK…PRDITEFEAY (232 aa)). Residues Lys-45, 52–54 (GRG), Val-94, and Glu-99 contribute to the ATP site. Positions 193 and 207 each coordinate Mg(2+). Substrate contacts are provided by residues Asn-260 and 317–319 (GIT).

It belongs to the succinate/malate CoA ligase beta subunit family. In terms of assembly, heterotetramer of two alpha and two beta subunits. The cofactor is Mg(2+).

The enzyme catalyses succinate + ATP + CoA = succinyl-CoA + ADP + phosphate. It catalyses the reaction GTP + succinate + CoA = succinyl-CoA + GDP + phosphate. The protein operates within carbohydrate metabolism; tricarboxylic acid cycle; succinate from succinyl-CoA (ligase route): step 1/1. Its function is as follows. Succinyl-CoA synthetase functions in the citric acid cycle (TCA), coupling the hydrolysis of succinyl-CoA to the synthesis of either ATP or GTP and thus represents the only step of substrate-level phosphorylation in the TCA. The beta subunit provides nucleotide specificity of the enzyme and binds the substrate succinate, while the binding sites for coenzyme A and phosphate are found in the alpha subunit. The chain is Succinate--CoA ligase [ADP-forming] subunit beta from Pyrobaculum islandicum (strain DSM 4184 / JCM 9189 / GEO3).